The chain runs to 100 residues: Small ribosomal subunit protein uS14c (100 aa).

The protein belongs to the universal ribosomal protein uS14 family. As to quaternary structure, part of the 30S ribosomal subunit.

It localises to the plastid. The protein localises to the chloroplast. Its function is as follows. Binds 16S rRNA, required for the assembly of 30S particles. The sequence is that of Small ribosomal subunit protein uS14c from Vitis vinifera (Grape).